We begin with the raw amino-acid sequence, 98 residues long: NADH-ubiquinone oxidoreductase chain 4L (98 aa).

A run of 3 helical transmembrane segments spans residues 1–21 (MSLV…GLLM), 29–49 (SLLC…IMIL), and 61–81 (IILL…LVMV).

Belongs to the complex I subunit 4L family. In terms of assembly, core subunit of respiratory chain NADH dehydrogenase (Complex I) which is composed of 45 different subunits.

It localises to the mitochondrion inner membrane. It catalyses the reaction a ubiquinone + NADH + 5 H(+)(in) = a ubiquinol + NAD(+) + 4 H(+)(out). Functionally, core subunit of the mitochondrial membrane respiratory chain NADH dehydrogenase (Complex I) which catalyzes electron transfer from NADH through the respiratory chain, using ubiquinone as an electron acceptor. Part of the enzyme membrane arm which is embedded in the lipid bilayer and involved in proton translocation. The protein is NADH-ubiquinone oxidoreductase chain 4L (MT-ND4L) of Mogera wogura (Japanese mole).